The following is a 507-amino-acid chain: Serine hydroxymethyltransferase (507 aa).

An N6-(pyridoxal phosphate)lysine modification is found at Lys283.

Belongs to the SHMT family. Homotetramer. Pyridoxal 5'-phosphate is required as a cofactor.

The enzyme catalyses (6R)-5,10-methylene-5,6,7,8-tetrahydrofolate + glycine + H2O = (6S)-5,6,7,8-tetrahydrofolate + L-serine. Its pathway is one-carbon metabolism; tetrahydrofolate interconversion. Its function is as follows. Interconversion of serine and glycine. The polypeptide is Serine hydroxymethyltransferase (mel-32) (Caenorhabditis elegans).